Reading from the N-terminus, the 477-residue chain is Ketoisovalerate oxidoreductase subunit VorA (477 aa).

Heterotrimer of the VorA, VorB and VorC subunits.

The enzyme catalyses 3-methyl-2-oxobutanoate + 2 oxidized [2Fe-2S]-[ferredoxin] + CoA = 2-methylpropanoyl-CoA + 2 reduced [2Fe-2S]-[ferredoxin] + CO2 + H(+). The protein is Ketoisovalerate oxidoreductase subunit VorA (vorA) of Methanothermobacter thermautotrophicus (strain ATCC 29096 / DSM 1053 / JCM 10044 / NBRC 100330 / Delta H) (Methanobacterium thermoautotrophicum).